Reading from the N-terminus, the 361-residue chain is S-adenosylmethionine:tRNA ribosyltransferase-isomerase (361 aa).

This sequence belongs to the QueA family. In terms of assembly, monomer.

The protein localises to the cytoplasm. The enzyme catalyses 7-aminomethyl-7-carbaguanosine(34) in tRNA + S-adenosyl-L-methionine = epoxyqueuosine(34) in tRNA + adenine + L-methionine + 2 H(+). Its pathway is tRNA modification; tRNA-queuosine biosynthesis. Transfers and isomerizes the ribose moiety from AdoMet to the 7-aminomethyl group of 7-deazaguanine (preQ1-tRNA) to give epoxyqueuosine (oQ-tRNA). The polypeptide is S-adenosylmethionine:tRNA ribosyltransferase-isomerase (Methylocella silvestris (strain DSM 15510 / CIP 108128 / LMG 27833 / NCIMB 13906 / BL2)).